A 272-amino-acid polypeptide reads, in one-letter code: 3-methyl-2-oxobutanoate hydroxymethyltransferase (272 aa).

2 residues coordinate Mg(2+): Asp43 and Asp82. Residues 43-44 (DS), Asp82, and Lys112 contribute to the 3-methyl-2-oxobutanoate site. Mg(2+) is bound at residue Glu114. The active-site Proton acceptor is Glu179.

The protein belongs to the PanB family. Homodecamer; pentamer of dimers. Requires Mg(2+) as cofactor.

Its subcellular location is the cytoplasm. The enzyme catalyses 3-methyl-2-oxobutanoate + (6R)-5,10-methylene-5,6,7,8-tetrahydrofolate + H2O = 2-dehydropantoate + (6S)-5,6,7,8-tetrahydrofolate. It functions in the pathway cofactor biosynthesis; (R)-pantothenate biosynthesis; (R)-pantoate from 3-methyl-2-oxobutanoate: step 1/2. In terms of biological role, catalyzes the reversible reaction in which hydroxymethyl group from 5,10-methylenetetrahydrofolate is transferred onto alpha-ketoisovalerate to form ketopantoate. This is 3-methyl-2-oxobutanoate hydroxymethyltransferase from Staphylococcus aureus (strain Mu3 / ATCC 700698).